Here is a 610-residue protein sequence, read N- to C-terminus: DNA mismatch repair protein MutL (610 aa).

This sequence belongs to the DNA mismatch repair MutL/HexB family.

In terms of biological role, this protein is involved in the repair of mismatches in DNA. It is required for dam-dependent methyl-directed DNA mismatch repair. May act as a 'molecular matchmaker', a protein that promotes the formation of a stable complex between two or more DNA-binding proteins in an ATP-dependent manner without itself being part of a final effector complex. The sequence is that of DNA mismatch repair protein MutL from Rickettsia peacockii (strain Rustic).